A 356-amino-acid polypeptide reads, in one-letter code: RuBisCO accumulation factor 1 (356 aa).

Residues A7 to D185 are N-terminal alpha-helix. Residues P209–V342 form a C-terminal beta-sheet region.

The protein belongs to the RAF family. Homodimer. Forms an RbcL(8)-Raf1(8) complex. Forms complexes of many stoichiometries with RbcL with and without RbcS. RbcX and Raf1 can bind simultaneously to RbcL.

It is found in the cytoplasm. A major RuBisCO chaperone. Acts after GroEL-GroES chaperonin to fold and/or assemble the large subunit of RuBisCO (ccbL, rbcL). Cooperates with RbcX in RbcL folding, plays the major role in assembly of dimers into RbcL(8)-Raf1(8) intermediate complexes. RbcS replaces Raf1, leading to holoenzyme formation. In terms of biological role, required for optimal reconstitution of RuBisCO upon expression of rbcL-rbcS subunits in E.coli. Only interacts with the large subunit (cbbL, rbcL). Probably acts in the final stages of RuBisCO assembly, possibly participating in the addition of the small subunit (ccbS, rbcS). The chain is RuBisCO accumulation factor 1 from Thermosynechococcus vestitus (strain NIES-2133 / IAM M-273 / BP-1).